Here is a 158-residue protein sequence, read N- to C-terminus: UPF0145 protein Psyc_1853 (158 aa).

The segment covering 113–122 has biased composition (polar residues); it reads IYQSSNQPPS. Positions 113-158 are disordered; the sequence is IYQSSNQPPSHHSGHSQYEEPVPSAAQPSTTAQANDDLPRFNPFGE.

Belongs to the UPF0145 family.

The polypeptide is UPF0145 protein Psyc_1853 (Psychrobacter arcticus (strain DSM 17307 / VKM B-2377 / 273-4)).